The following is a 479-amino-acid chain: MFS-type transporter lnaF (479 aa).

Helical transmembrane passes span 47–67 (WIYL…GFTP), 71–91 (GLII…SGAI), 104–124 (LLCI…GPLI), 136–156 (WCFY…VFLL), 177–197 (LVGL…LSWG), 208–228 (IIGL…VQWW), 250–270 (IFSF…PIWF), 283–303 (LMSI…AVLV), 306–326 (IGFY…GAGL), 344–364 (IPFG…VQAV), and 372–392 (LAIA…ISVA). Asn416 is a glycosylation site (N-linked (GlcNAc...) asparagine). The chain crosses the membrane as a helical span at residues 442–462 (LAITQALYVGVALSSLAIVGA).

This sequence belongs to the major facilitator superfamily. TCR/Tet family.

It localises to the cell membrane. Functionally, MFS-type transporter; part of the lnb gene cluster that mediates the biosynthesis of diastereomeric piperazines. Lna and lnb clusters encode sets of enzymes that produce overlapping sets of previously undescribed metabolites such as piperazinomycin-like metabolites or morpholine. The lna and lnb biosynthetic pathways appear to be part of a signaling network that controls the formation of sclerotia, a resilient overwintering structure. May be involved in the secretion of the metabolites produced by the lna and lnb clusters. The sequence is that of MFS-type transporter lnaF from Aspergillus flavus (strain ATCC 200026 / FGSC A1120 / IAM 13836 / NRRL 3357 / JCM 12722 / SRRC 167).